The chain runs to 457 residues: Fibrinogen C domain-containing protein 1-A (457 aa).

The disordered stretch occupies residues 1 to 20 (MGSDRWKNIGGTPQMEDSAQ). Residues 1 to 33 (MGSDRWKNIGGTPQMEDSAQEKTQRKGCGYILC) are Cytoplasmic-facing. A helical; Signal-anchor for type II membrane protein membrane pass occupies residues 34–54 (TVLLSVAVLLAVTVTGAVLFM). Topologically, residues 55 to 457 (NHYHAPSTEP…MKIRPQREEN (403 aa)) are extracellular. The interval 216–235 (ADLQRAPSRNSRPRGCANGS) is disordered. A Fibrinogen C-terminal domain is found at 231-454 (CANGSKPRDC…FTEMKIRPQR (224 aa)). An N-linked (GlcNAc...) asparagine glycan is attached at asparagine 233. An intrachain disulfide couples cysteine 240 to cysteine 269. N-linked (GlcNAc...) asparagine glycosylation occurs at asparagine 336. Residues aspartate 389 and aspartate 391 each contribute to the Ca(2+) site. An intrachain disulfide couples cysteine 397 to cysteine 410.

Homotetramer; disulfide-linked.

It localises to the membrane. Acetyl group-binding receptor which shows a calcium-dependent binding to acetylated structures such as chitin, some N-acetylated carbohydrates, and amino acids. In Xenopus laevis (African clawed frog), this protein is Fibrinogen C domain-containing protein 1-A (fibcd1-a).